Here is a 35-residue protein sequence, read N- to C-terminus: uncharacterized protein (35 aa).

A helical membrane pass occupies residues 14–34 (VVVLLAICGAMLLLRWAAMIW).

It localises to the membrane. This is an uncharacterized protein from Escherichia coli (strain K12).